Reading from the N-terminus, the 431-residue chain is MADLLWQKPGVAVDAQIQTFLAGDDVILDREFFLHDIAASAAHAQGLQHIGILSADELAGLLRELEILAQDFREGRFVLDTQYEDGHSAIEARLTERLGDAGRKIHTGRSRNDQILVATRLWLKEKLLSVAQLSADVAKVALDRAQAEKDLPIPGYTHIQRAVVSSAGMWWAGWAEAFIDNAIRARDTHALVDANPLGTAAGYGVNLPLDREHTTAALGFARMQISPIYAQLSRGKFELAALEALGGATLDLRRIAWDLSLFTSAEFGFVALPAQYTTGSSIMPNKRNPDVIELMRATHASVAAARTEIEQLLSLPSGYHRDLQSSKGAIFHGFGRGLAALELLPALLANLEWRDDKLRAAIDSGMYATDVAVEAAVAGVPFREAYKAAAAGADSAGQGRTPEGSLAARVSPGSAADLRLDELRARWQALS.

The protein belongs to the lyase 1 family. Argininosuccinate lyase subfamily.

It localises to the cytoplasm. The enzyme catalyses 2-(N(omega)-L-arginino)succinate = fumarate + L-arginine. It participates in amino-acid biosynthesis; L-arginine biosynthesis; L-arginine from L-ornithine and carbamoyl phosphate: step 3/3. The polypeptide is Argininosuccinate lyase (Stenotrophomonas maltophilia (strain K279a)).